Consider the following 297-residue polypeptide: 4-diphosphocytidyl-2-C-methyl-D-erythritol kinase (297 aa).

K10 is a catalytic residue. Residue P94–S104 participates in ATP binding. The active site involves D136.

This sequence belongs to the GHMP kinase family. IspE subfamily.

The catalysed reaction is 4-CDP-2-C-methyl-D-erythritol + ATP = 4-CDP-2-C-methyl-D-erythritol 2-phosphate + ADP + H(+). The protein operates within isoprenoid biosynthesis; isopentenyl diphosphate biosynthesis via DXP pathway; isopentenyl diphosphate from 1-deoxy-D-xylulose 5-phosphate: step 3/6. In terms of biological role, catalyzes the phosphorylation of the position 2 hydroxy group of 4-diphosphocytidyl-2C-methyl-D-erythritol. This chain is 4-diphosphocytidyl-2-C-methyl-D-erythritol kinase, found in Shouchella clausii (strain KSM-K16) (Alkalihalobacillus clausii).